A 160-amino-acid chain; its full sequence is Eukaryotic translation initiation factor 5A-3 (160 aa).

A compositionally biased stretch (basic and acidic residues) spans 1–12; sequence MSDEEHHFESKA. The interval 1–21 is disordered; it reads MSDEEHHFESKADAGASKTYP. A Hypusine modification is found at lysine 52.

The protein belongs to the eIF-5A family. Post-translationally, lys-52 undergoes hypusination, a unique post-translational modification that consists in the addition of a butylamino group from spermidine to lysine side chain, leading to the formation of the unusual amino acid hypusine. eIF-5As are the only known proteins to undergo this modification, which is essential for their function.

Translation factor that promotes translation elongation and termination, particularly upon ribosome stalling at specific amino acid sequence contexts. Binds between the exit (E) and peptidyl (P) site of the ribosome and promotes rescue of stalled ribosome: specifically required for efficient translation of polyproline-containing peptides as well as other motifs that stall the ribosome. Acts as a ribosome quality control (RQC) cofactor by joining the RQC complex to facilitate peptidyl transfer during CAT tailing step. The sequence is that of Eukaryotic translation initiation factor 5A-3 (EIF5A3) from Solanum tuberosum (Potato).